The chain runs to 397 residues: GTPase Obg (397 aa).

The Obg domain maps to 1-159 (MKFVDEAEIR…RMLKLELMLL (159 aa)). Residues 22-44 (SFRREKYVPDGGPDGGDGGDGGS) are disordered. Gly residues predominate over residues 33–43 (GPDGGDGGDGG). In terms of domain architecture, OBG-type G spans 160 to 333 (ADVGLLGMPN…LCIKVMDFIE (174 aa)). Residues 166–173 (GMPNAGKS), 191–195 (FTTLV), 213–216 (DIPG), 283–286 (NKVD), and 314–316 (SAV) each bind GTP. Residues Ser-173 and Thr-193 each contribute to the Mg(2+) site. The interval 359–389 (TVENYEDDDDFDDDDDDDFDGDDDDDFDGDD) is disordered. Residues 361–389 (ENYEDDDDFDDDDDDDFDGDDDDDFDGDD) show a composition bias toward acidic residues.

This sequence belongs to the TRAFAC class OBG-HflX-like GTPase superfamily. OBG GTPase family. As to quaternary structure, monomer. Requires Mg(2+) as cofactor.

Its subcellular location is the cytoplasm. An essential GTPase which binds GTP, GDP and possibly (p)ppGpp with moderate affinity, with high nucleotide exchange rates and a fairly low GTP hydrolysis rate. Plays a role in control of the cell cycle, stress response, ribosome biogenesis and in those bacteria that undergo differentiation, in morphogenesis control. This chain is GTPase Obg, found in Pseudoalteromonas atlantica (strain T6c / ATCC BAA-1087).